A 151-amino-acid polypeptide reads, in one-letter code: Small ribosomal subunit protein uS15z (151 aa).

This sequence belongs to the universal ribosomal protein uS15 family.

In Arabidopsis thaliana (Mouse-ear cress), this protein is Small ribosomal subunit protein uS15z (RPS13A).